A 426-amino-acid chain; its full sequence is Histidine--tRNA ligase (426 aa).

Belongs to the class-II aminoacyl-tRNA synthetase family. As to quaternary structure, homodimer.

It localises to the cytoplasm. It carries out the reaction tRNA(His) + L-histidine + ATP = L-histidyl-tRNA(His) + AMP + diphosphate + H(+). The sequence is that of Histidine--tRNA ligase from Geobacillus thermodenitrificans (strain NG80-2).